A 401-amino-acid polypeptide reads, in one-letter code: S-adenosylmethionine synthase (401 aa).

Position 16 (His16) interacts with ATP. Asp18 provides a ligand contact to Mg(2+). Glu44 contributes to the K(+) binding site. Residues Glu57 and Gln100 each contribute to the L-methionine site. Residues 100–110 (QSPDIAQGVNE) form a flexible loop region. ATP-binding positions include 174–176 (DAK), 241–242 (RF), Asp250, 256–257 (RK), Ala273, and Lys277. L-methionine is bound at residue Asp250. Lys281 is a binding site for L-methionine.

It belongs to the AdoMet synthase family. In terms of assembly, homotetramer; dimer of dimers. It depends on Mg(2+) as a cofactor. Requires K(+) as cofactor.

The protein localises to the cytoplasm. The enzyme catalyses L-methionine + ATP + H2O = S-adenosyl-L-methionine + phosphate + diphosphate. The protein operates within amino-acid biosynthesis; S-adenosyl-L-methionine biosynthesis; S-adenosyl-L-methionine from L-methionine: step 1/1. Catalyzes the formation of S-adenosylmethionine (AdoMet) from methionine and ATP. The overall synthetic reaction is composed of two sequential steps, AdoMet formation and the subsequent tripolyphosphate hydrolysis which occurs prior to release of AdoMet from the enzyme. This Streptococcus equi subsp. zooepidemicus (strain H70) protein is S-adenosylmethionine synthase.